Here is a 133-residue protein sequence, read N- to C-terminus: Small ribosomal subunit protein eS8 (133 aa).

Positions 1 to 22 (MGFYQGPDNRKITGGLKGKHRD) are disordered.

It belongs to the eukaryotic ribosomal protein eS8 family. As to quaternary structure, part of the 30S ribosomal subunit.

The polypeptide is Small ribosomal subunit protein eS8 (Saccharolobus islandicus (strain M.14.25 / Kamchatka #1) (Sulfolobus islandicus)).